The chain runs to 63 residues: uncharacterized protein (63 aa).

This is an uncharacterized protein from Bacillus subtilis (strain 168).